The primary structure comprises 658 residues: MTSLAAGKPAPLGASYDGKGVNFALFSAHAERVELCVFDEQGNEQRVDLPARSGDIWHGWLDAAGPGLRYGYRVHGPWDPAQGHRFNPAKLLLDPCAYRVEGDLPDDERLHGGMWEPDHRDSAAIAPKSQVVDLHYDWRGDKPPRTPWGETVIYEAHVKGLTLLHPQLPEAIRGTYKALGHPVMIAYFKSLGISALELLPVAQFASEPRLQRMGLSNYWGYNPLAWFALDPRYASDPARALDEFRDAVKALHAAGIEVILDIVLNHSAEIDLEGPTVSLRGIDNRSYYWVREDGDYHNWTGCGNTLNLSHPGVVEWARQCLRFWVDECHVDGFRFDLASVMGRTPEFRQDAPLFEAIRRDSVLSQVKLIAEPWDIGPGGYQVANFPPLFAEWNDHFRDISRRFWLQQNVSLGDFAQRFAASSDLFARDGKRPSATVNLVTAHDGFTLRDCVCFNQKHNEANGEENRDGTNNNYSNNHGIEGLDANLAVIERRRASVHALLTTLLLAQGTPMLLAGDEQGHSQHGNNNAYCQDNALTWLDWRQANPGLTAFTAALIHLRRRIPALTRNRWWQEGDGNVRWLNRNAQPLTAGEWQLGAACMQIQLSDRWLLTLNATAEVVDMVLPEGEWRAVPPFAGEDNPVIMAVWHGPAHGVCVFQRS.

Residue D336 is the Nucleophile of the active site. Residue E371 is the Proton donor of the active site.

Belongs to the glycosyl hydrolase 13 family.

It catalyses the reaction Hydrolysis of (1-&gt;6)-alpha-D-glucosidic linkages to branches with degrees of polymerization of three or four glucose residues in limit dextrin.. Its pathway is glycan degradation; glycogen degradation. Its function is as follows. Removes maltotriose and maltotetraose chains that are attached by 1,6-alpha-linkage to the limit dextrin main chain, generating a debranched limit dextrin. This chain is Glycogen debranching enzyme, found in Klebsiella pneumoniae (strain 342).